Consider the following 130-residue polypeptide: MNFVFLWAALGGAIGSSLRYFVGKMMPSKFLMFESFPLGTFSVNIIGCFVIGFMGHLAVKKVFGDDFGIFFVTGVLGGFTTFSSYGLDTLKLLQKSQYIEAVSYALGTNILGLTGVAIGWFLAKNFVGIH.

Transmembrane regions (helical) follow at residues 3-23 (FVFL…YFVG), 39-59 (GTFS…HLAV), 67-87 (FGIF…SYGL), and 102-122 (VSYA…GWFL). Na(+)-binding residues include Gly77 and Thr80.

The protein belongs to the fluoride channel Fluc/FEX (TC 1.A.43) family.

The protein resides in the cell inner membrane. The enzyme catalyses fluoride(in) = fluoride(out). Na(+) is not transported, but it plays an essential structural role and its presence is essential for fluoride channel function. Its function is as follows. Fluoride-specific ion channel. Important for reducing fluoride concentration in the cell, thus reducing its toxicity. This Helicobacter pylori (strain ATCC 700392 / 26695) (Campylobacter pylori) protein is Fluoride-specific ion channel FluC.